A 142-amino-acid chain; its full sequence is Lutropin subunit beta (142 aa).

The first 21 residues, 1–21 (MEMLQGLLLLWLLLNVGGVWT), serve as a signal peptide directing secretion. 6 disulfide bridges follow: C30/C78, C44/C93, C47/C131, C55/C109, C59/C111, and C114/C121. An N-linked (GlcNAc...) asparagine glycan is attached at N34.

It belongs to the glycoprotein hormones subunit beta family. As to quaternary structure, heterodimer of a common alpha chain and a unique beta chain which confers biological specificity to thyrotropin, lutropin, follitropin and gonadotropin.

The protein localises to the secreted. Promotes spermatogenesis and ovulation by stimulating the testes and ovaries to synthesize steroids. This Panthera tigris altaica (Siberian tiger) protein is Lutropin subunit beta (LHB).